Reading from the N-terminus, the 357-residue chain is Non-structural protein NS2 (357 aa).

Disordered stretches follow at residues 163–199 (NERE…AREM) and 228–267 (LDEK…PKTH). Acidic residues-rich tracts occupy residues 230-241 (EKDEEDGDERED) and 250-260 (DDDEQGEDASD).

Belongs to the orbivirus non-structural protein NS2 family.

In terms of biological role, single-stranded RNA-binding protein. The sequence is that of Non-structural protein NS2 (Segment-8) from Antilocapra americana (Pronghorn).